The chain runs to 437 residues: GTPase Der (437 aa).

EngA-type G domains lie at 4–168 and 177–352; these read PVVA…PAED and IRVS…QAHS. Residues 10–17, 57–61, 120–123, 183–190, 230–234, and 295–298 contribute to the GTP site; these read GRPNVGKS, DTGGI, NKAD, DTAGM, and NKWD. Positions 353-437 constitute a KH-like domain; sequence MRIPTAVLND…PVRIWTRKKT (85 aa).

Belongs to the TRAFAC class TrmE-Era-EngA-EngB-Septin-like GTPase superfamily. EngA (Der) GTPase family. In terms of assembly, associates with the 50S ribosomal subunit.

GTPase that plays an essential role in the late steps of ribosome biogenesis. The sequence is that of GTPase Der from Brevibacillus brevis (strain 47 / JCM 6285 / NBRC 100599).